A 257-amino-acid chain; its full sequence is uncharacterized protein (257 aa).

Positions 1-22 (MIHSKRLKMCLCLIILSVFIGA) are cleaved as a signal peptide. The N-palmitoyl cysteine moiety is linked to residue cysteine 23. Cysteine 23 carries the S-diacylglycerol cysteine lipid modification.

This sequence belongs to the staphylococcal tandem lipoprotein family.

The protein localises to the cell membrane. This is an uncharacterized protein from Staphylococcus aureus (strain MRSA252).